A 387-amino-acid chain; its full sequence is Patatin group D-3 (387 aa).

Positions methionine 1 to alanine 23 are cleaved as a signal peptide. A PNPLA domain is found at leucine 32 to isoleucine 230. A GXGXXG motif is present at residues glycine 36–glycine 41. Residues glycine 75–glycine 79 carry the GXSXG motif. The active-site Nucleophile is the serine 77. An N-linked (GlcNAc...) asparagine glycan is attached at asparagine 115. The active-site Proton acceptor is the aspartate 216. The DGA/G signature appears at aspartate 216 to alanine 218. Positions glutamate 361 to alanine 385 form a coiled coil.

This sequence belongs to the patatin family. In terms of tissue distribution, tuber.

The protein resides in the vacuole. Its function is as follows. Probable lipolytic acyl hydrolase (LAH), an activity which is thought to be involved in the response of tubers to pathogens. The sequence is that of Patatin group D-3 from Solanum tuberosum (Potato).